We begin with the raw amino-acid sequence, 494 residues long: Probable cytosol aminopeptidase (494 aa).

2 residues coordinate Mn(2+): K264 and D269. Residue K276 is part of the active site. Mn(2+) is bound by residues D287, D346, and E348. R350 is a catalytic residue.

This sequence belongs to the peptidase M17 family. It depends on Mn(2+) as a cofactor.

It is found in the cytoplasm. It carries out the reaction Release of an N-terminal amino acid, Xaa-|-Yaa-, in which Xaa is preferably Leu, but may be other amino acids including Pro although not Arg or Lys, and Yaa may be Pro. Amino acid amides and methyl esters are also readily hydrolyzed, but rates on arylamides are exceedingly low.. It catalyses the reaction Release of an N-terminal amino acid, preferentially leucine, but not glutamic or aspartic acids.. In terms of biological role, presumably involved in the processing and regular turnover of intracellular proteins. Catalyzes the removal of unsubstituted N-terminal amino acids from various peptides. The polypeptide is Probable cytosol aminopeptidase (pepA) (Pasteurella multocida (strain Pm70)).